A 227-amino-acid chain; its full sequence is Large ribosomal subunit protein bL25 (227 aa).

The segment at methionine 1–serine 22 is disordered.

It belongs to the bacterial ribosomal protein bL25 family. CTC subfamily. In terms of assembly, part of the 50S ribosomal subunit; part of the 5S rRNA/L5/L18/L25 subcomplex. Contacts the 5S rRNA. Binds to the 5S rRNA independently of L5 and L18.

Its function is as follows. This is one of the proteins that binds to the 5S RNA in the ribosome where it forms part of the central protuberance. This Methylocella silvestris (strain DSM 15510 / CIP 108128 / LMG 27833 / NCIMB 13906 / BL2) protein is Large ribosomal subunit protein bL25.